The primary structure comprises 338 residues: MTDLKPFLAKAASREPLTREEARSAFDILMSGQATPSQIGGFLMALRVRGETVDEIVGAVASMRSKMLTVEAPADAIDIVGTGGDASGTYNISTLAALIVAGAGVPVAKHGNRALSSKSGAADNLAALGVKLDVGPEIISRCIAEAGVGFMFAQMHHSAMRHVGPSRVELGTRTIFNLLGPLSNPAGVRRQLLGVFSPQWLVPLAEVMRDLGSECVWVVHGDGLDEITTTGITKVAALEDGKIRTFELSPADFGVSPCVLADIKGGDGVANAAALREVLGGAKNAYRDVSLANAAASLVIAGKVETIHDGMTLAAQSLDSGATALALDKLIAVSNDID.

5-phospho-alpha-D-ribose 1-diphosphate contacts are provided by residues Gly81, 84-85, Thr89, 91-94, 109-117, and Ala121; these read GD, NIST, and KHGNRALSS. Gly81 serves as a coordination point for anthranilate. A Mg(2+)-binding site is contributed by Ser93. Anthranilate is bound at residue Asn112. Position 167 (Arg167) interacts with anthranilate. Mg(2+) is bound by residues Asp225 and Glu226.

Belongs to the anthranilate phosphoribosyltransferase family. Homodimer. Mg(2+) is required as a cofactor.

The enzyme catalyses N-(5-phospho-beta-D-ribosyl)anthranilate + diphosphate = 5-phospho-alpha-D-ribose 1-diphosphate + anthranilate. It participates in amino-acid biosynthesis; L-tryptophan biosynthesis; L-tryptophan from chorismate: step 2/5. Functionally, catalyzes the transfer of the phosphoribosyl group of 5-phosphorylribose-1-pyrophosphate (PRPP) to anthranilate to yield N-(5'-phosphoribosyl)-anthranilate (PRA). The chain is Anthranilate phosphoribosyltransferase from Rhizobium johnstonii (strain DSM 114642 / LMG 32736 / 3841) (Rhizobium leguminosarum bv. viciae).